Here is a 133-residue protein sequence, read N- to C-terminus: Probable nuclear transport factor 2 (133 aa).

In terms of domain architecture, NTF2 spans 10-128 (VAKAFIQHYY…YFIGNEIFRL (119 aa)).

It localises to the cytoplasm. Facilitates protein transport into the nucleus. Could be part of a multicomponent system of cytosolic factors that assemble at the pore complex during nuclear import. In Caenorhabditis elegans, this protein is Probable nuclear transport factor 2 (ran-4).